A 463-amino-acid chain; its full sequence is 4-hydroxybenzoate polyprenyltransferase, mitochondrial (463 aa).

Disordered stretches follow at residues 28-48 and 133-152; these read NNNTNNNNNNNGINKYNSTFN and LLDDNNSNSNNNNNSNNNKP. Residues 137-150 are compositionally biased toward low complexity; it reads NNSNSNNNNNSNNN. 7 helical membrane passes run 181-201, 206-226, 257-277, 305-325, 330-350, 375-395, and 431-451; these read IGVWLLLYPCCWSISLAAPAG, LKTMLVFGIGAYVMRSAGCVI, LIFLGGQLLASFGLILSSLNY, FVLGLAFNWGALAGYSAIAGS, IVAPLYLAGISWTMVYDTIYA, IILSVFSGLVISGMFLTGIAA, and FISNKNFGLYFLLIIIVSKLL.

This sequence belongs to the UbiA prenyltransferase family. Mg(2+) serves as cofactor.

It is found in the mitochondrion inner membrane. The catalysed reaction is an all-trans-polyprenyl diphosphate + 4-hydroxybenzoate = a 4-hydroxy-3-(all-trans-polyprenyl)benzoate + diphosphate. It participates in cofactor biosynthesis; ubiquinone biosynthesis. Catalyzes the prenylation of para-hydroxybenzoate (PHB) with an all-trans polyprenyl group. Mediates the second step in the final reaction sequence of coenzyme Q (CoQ) biosynthesis, which is the condensation of the polyisoprenoid side chain with PHB. Its function is as follows. Catalyzes the prenylation of para-hydroxybenzoate (PHB) with an all-trans polyprenyl group. Mediates the second step in the final reaction sequence of coenzyme Q (CoQ) biosynthesis, which is the condensation of the polyisoprenoid side chain with PHB, generating the first membrane-bound Q intermediate. In Dictyostelium discoideum (Social amoeba), this protein is 4-hydroxybenzoate polyprenyltransferase, mitochondrial.